Reading from the N-terminus, the 161-residue chain is 18.1 kDa class I heat shock protein (161 aa).

Residues 47-161 (ETAAFAGARI…PDVKSIQVTG (115 aa)) enclose the sHSP domain.

It belongs to the small heat shock protein (HSP20) family. May form oligomeric structures.

Its subcellular location is the cytoplasm. The polypeptide is 18.1 kDa class I heat shock protein (HSP18.1) (Oryza sativa subsp. japonica (Rice)).